A 445-amino-acid polypeptide reads, in one-letter code: 4-hydroxyphenylpyruvate dioxygenase (445 aa).

Residues 1-11 (MGHQNAAVSEN) are compositionally biased toward polar residues. Residues 1-20 (MGHQNAAVSENQNHDDGAAS) form a disordered region. VOC domains follow at residues 46–192 (RFHH…YVSY) and 223–383 (RLDH…IFTK). Residues H226, H308, and E394 each coordinate Fe cation.

The protein belongs to the 4HPPD family. As to quaternary structure, homodimer. The cofactor is Fe cation.

It is found in the cytoplasm. It carries out the reaction 3-(4-hydroxyphenyl)pyruvate + O2 = homogentisate + CO2. It participates in amino-acid degradation; L-phenylalanine degradation; acetoacetate and fumarate from L-phenylalanine: step 3/6. It functions in the pathway cofactor biosynthesis; prenylquinone biosynthesis. In terms of biological role, catalyzes the conversion of 4-hydroxyphenylpyruvic acid to homogentisic acid, one of the steps in tyrosine catabolism. This chain is 4-hydroxyphenylpyruvate dioxygenase (HPD), found in Arabidopsis thaliana (Mouse-ear cress).